Here is a 122-residue protein sequence, read N- to C-terminus: Ribosome-binding factor A (122 aa).

It belongs to the RbfA family. Monomer. Binds 30S ribosomal subunits, but not 50S ribosomal subunits or 70S ribosomes.

The protein resides in the cytoplasm. Its function is as follows. One of several proteins that assist in the late maturation steps of the functional core of the 30S ribosomal subunit. Associates with free 30S ribosomal subunits (but not with 30S subunits that are part of 70S ribosomes or polysomes). Required for efficient processing of 16S rRNA. May interact with the 5'-terminal helix region of 16S rRNA. The chain is Ribosome-binding factor A from Cupriavidus necator (strain ATCC 17699 / DSM 428 / KCTC 22496 / NCIMB 10442 / H16 / Stanier 337) (Ralstonia eutropha).